The chain runs to 252 residues: Small capsomere-interacting protein (252 aa).

The segment at 69-252 (NKKRSGGPEK…APRGKLGKGR (184 aa)) is disordered. Residues 83–93 (ANPGAGPQNAP) are compositionally biased toward low complexity. Residues 94-109 (GCGGGGSGSGGSGPPG) are compositionally biased toward gly residues. Over residues 182–192 (PPAPPPLPQVP) the composition is skewed to pro residues. Polar residues predominate over residues 213–237 (LPQQLGTAGSDNSGGQASSPGSQNP).

Belongs to the herpesviridae small capsomere-interacting protein family. As to quaternary structure, interacts with the major capsid protein/MCP.

The protein localises to the virion. The protein resides in the host nucleus. Its function is as follows. Participates in the assembly of the infectious particles by decorating the outer surface of the capsid shell and thus forming a layer between the capsid and the tegument. Complexes composed of the major capsid protein and small capsomere-interacting protein/SCP assemble together in the host cytoplasm and are translocated to the nucleus, where they accumulate and participate in capsid assembly. In Connochaetes taurinus (Blue wildebeest), this protein is Small capsomere-interacting protein.